The following is a 592-amino-acid chain: V-type ATP synthase alpha chain 1 (592 aa).

Residue 233–240 (GPFGSGKT) coordinates ATP.

The protein belongs to the ATPase alpha/beta chains family.

The catalysed reaction is ATP + H2O + 4 H(+)(in) = ADP + phosphate + 5 H(+)(out). Its function is as follows. Produces ATP from ADP in the presence of a proton gradient across the membrane. The V-type alpha chain is a catalytic subunit. The protein is V-type ATP synthase alpha chain 1 of Clostridium tetani (strain Massachusetts / E88).